A 206-amino-acid chain; its full sequence is Cytidylate kinase (206 aa).

7–15 (GVAASGKSS) lines the ATP pocket.

The protein belongs to the cytidylate kinase family. Type 1 subfamily.

Its subcellular location is the cytoplasm. The catalysed reaction is CMP + ATP = CDP + ADP. It catalyses the reaction dCMP + ATP = dCDP + ADP. In Deinococcus radiodurans (strain ATCC 13939 / DSM 20539 / JCM 16871 / CCUG 27074 / LMG 4051 / NBRC 15346 / NCIMB 9279 / VKM B-1422 / R1), this protein is Cytidylate kinase.